A 348-amino-acid polypeptide reads, in one-letter code: Anthranilate phosphoribosyltransferase (348 aa).

5-phospho-alpha-D-ribose 1-diphosphate contacts are provided by residues Gly-81, 84–85 (GD), 91–94 (NVST), 109–117 (KHGNRAVSG), and Ser-121. Gly-81 provides a ligand contact to anthranilate. Ser-93 is a Mg(2+) binding site. Asn-112 is a binding site for anthranilate. Arg-167 is a binding site for anthranilate. 2 residues coordinate Mg(2+): Asp-226 and Glu-227.

The protein belongs to the anthranilate phosphoribosyltransferase family. As to quaternary structure, homodimer. The cofactor is Mg(2+).

It carries out the reaction N-(5-phospho-beta-D-ribosyl)anthranilate + diphosphate = 5-phospho-alpha-D-ribose 1-diphosphate + anthranilate. It participates in amino-acid biosynthesis; L-tryptophan biosynthesis; L-tryptophan from chorismate: step 2/5. In terms of biological role, catalyzes the transfer of the phosphoribosyl group of 5-phosphorylribose-1-pyrophosphate (PRPP) to anthranilate to yield N-(5'-phosphoribosyl)-anthranilate (PRA). This is Anthranilate phosphoribosyltransferase from Stutzerimonas stutzeri (strain A1501) (Pseudomonas stutzeri).